Reading from the N-terminus, the 412-residue chain is FAD-dependent monooxygenase nscC (412 aa).

An N-terminal signal peptide occupies residues 1 to 21; that stretch reads MAKPQATVLIIGAGISGLTTS. FAD is bound by residues E35 and A46. N-linked (GlcNAc...) asparagine glycosylation is present at N92. R119 serves as a coordination point for FAD. 2 N-linked (GlcNAc...) asparagine glycosylation sites follow: N170 and N231. FAD contacts are provided by D326 and G339.

This sequence belongs to the paxM FAD-dependent monooxygenase family. FAD is required as a cofactor.

The protein operates within secondary metabolite biosynthesis. In terms of biological role, FAD-dependent monooxygenase; part of the gene cluster that mediates the biosynthesis of neosartoricin B, a prenylated anthracenone that probably exhibits T-cell antiproliferative activity, suggestive of a physiological role as an immunosuppressive agent. The non-reducing polyketide synthase nscA probably synthesizes and cyclizes the decaketide backbone. The hydrolase nscB then mediates the product release through hydrolysis followed by spontaneous decarboxylation. The prenyltransferase nscD catalyzes the addition of the dimethylallyl group to the aromatic C5. The FAD-dependent monooxygenase nscC is then responsible for the stereospecific hydroxylation at C2. Neosartoricin B can be converted into two additional compounds neosartoricins C and D. Neosartoricin C is a spirocyclic compound that is cyclized through the attack of C3 hydroxyl on C14, followed by dehydration. On the other hand, neosartoricin D is a further cyclized compound in which attack of C2 on C14 in neosartoricin C results in the formation of the acetal-containing dioxabicyclo-octanone ring. Both of these compounds are novel and possibly represent related metabolites of the gene cluster. This Arthroderma otae (strain ATCC MYA-4605 / CBS 113480) (Microsporum canis) protein is FAD-dependent monooxygenase nscC.